The primary structure comprises 305 residues: tRNA dimethylallyltransferase 1 (305 aa).

ATP is bound at residue 10 to 17; sequence GPTASGKS. Residue 12 to 17 coordinates substrate; the sequence is TASGKS. Positions 35–38 are interaction with substrate tRNA; sequence DSLT.

Belongs to the IPP transferase family. In terms of assembly, monomer. Mg(2+) is required as a cofactor.

It catalyses the reaction adenosine(37) in tRNA + dimethylallyl diphosphate = N(6)-dimethylallyladenosine(37) in tRNA + diphosphate. Catalyzes the transfer of a dimethylallyl group onto the adenine at position 37 in tRNAs that read codons beginning with uridine, leading to the formation of N6-(dimethylallyl)adenosine (i(6)A). The chain is tRNA dimethylallyltransferase 1 from Trichlorobacter lovleyi (strain ATCC BAA-1151 / DSM 17278 / SZ) (Geobacter lovleyi).